Reading from the N-terminus, the 117-residue chain is Large ribosomal subunit protein uL18 (117 aa).

It belongs to the universal ribosomal protein uL18 family. Part of the 50S ribosomal subunit; part of the 5S rRNA/L5/L18/L25 subcomplex. Contacts the 5S and 23S rRNAs.

Functionally, this is one of the proteins that bind and probably mediate the attachment of the 5S RNA into the large ribosomal subunit, where it forms part of the central protuberance. This chain is Large ribosomal subunit protein uL18, found in Actinobacillus succinogenes (strain ATCC 55618 / DSM 22257 / CCUG 43843 / 130Z).